Consider the following 310-residue polypeptide: Ribonuclease Z (310 aa).

H60, H62, D64, H65, H140, D209, and H269 together coordinate Zn(2+). The active-site Proton acceptor is the D64.

Belongs to the RNase Z family. In terms of assembly, homodimer. Requires Zn(2+) as cofactor.

It carries out the reaction Endonucleolytic cleavage of RNA, removing extra 3' nucleotides from tRNA precursor, generating 3' termini of tRNAs. A 3'-hydroxy group is left at the tRNA terminus and a 5'-phosphoryl group is left at the trailer molecule.. Functionally, zinc phosphodiesterase, which displays some tRNA 3'-processing endonuclease activity. Probably involved in tRNA maturation, by removing a 3'-trailer from precursor tRNA. The chain is Ribonuclease Z from Methanococcus maripaludis (strain C7 / ATCC BAA-1331).